A 143-amino-acid chain; its full sequence is Probable cyclic pyranopterin monophosphate synthase (143 aa).

Substrate-binding positions include Y61 to H63 and M97 to E98. The active site involves D112.

This sequence belongs to the MoaC family. As to quaternary structure, homohexamer; trimer of dimers.

It catalyses the reaction (8S)-3',8-cyclo-7,8-dihydroguanosine 5'-triphosphate = cyclic pyranopterin phosphate + diphosphate. It participates in cofactor biosynthesis; molybdopterin biosynthesis. Catalyzes the conversion of (8S)-3',8-cyclo-7,8-dihydroguanosine 5'-triphosphate to cyclic pyranopterin monophosphate (cPMP). In Thermoplasma acidophilum (strain ATCC 25905 / DSM 1728 / JCM 9062 / NBRC 15155 / AMRC-C165), this protein is Probable cyclic pyranopterin monophosphate synthase.